Reading from the N-terminus, the 211-residue chain is Arginine exporter protein ArgO (211 aa).

The next 6 membrane-spanning stretches (helical) occupy residues 1–21, 37–57, 68–88, 111–131, 147–167, and 179–199; these read MISY…PLGP, LMIA…GIFG, LLAL…LGAL, IIAT…DTFV, WFAL…ALLA, and AQRI…FQLA.

Belongs to the LysE/ArgO transporter (TC 2.A.75) family.

It localises to the cell inner membrane. The catalysed reaction is L-arginine(in) = L-arginine(out). In terms of biological role, involved in the export of arginine. Important to control the intracellular level of arginine and the correct balance between arginine and lysine. The polypeptide is Arginine exporter protein ArgO (Salmonella enteritidis PT4 (strain P125109)).